The following is a 92-amino-acid chain: Small ribosomal subunit protein uS19c (92 aa).

The protein belongs to the universal ribosomal protein uS19 family.

The protein localises to the plastid. It localises to the chloroplast. Functionally, protein S19 forms a complex with S13 that binds strongly to the 16S ribosomal RNA. This chain is Small ribosomal subunit protein uS19c, found in Guizotia abyssinica (Niger).